The following is a 151-amino-acid chain: Large ribosomal subunit protein eL19 (151 aa).

Residues 62 to 93 (RLKERRKKRSLKSEGKKSGSRKGKKGARANSK) are disordered. Residues 79–88 (SGSRKGKKGA) show a composition bias toward basic residues.

It belongs to the eukaryotic ribosomal protein eL19 family. As to quaternary structure, part of the 50S ribosomal subunit.

In terms of biological role, binds to the 23S rRNA. The polypeptide is Large ribosomal subunit protein eL19 (Saccharolobus solfataricus (strain ATCC 35092 / DSM 1617 / JCM 11322 / P2) (Sulfolobus solfataricus)).